Consider the following 30-residue polypeptide: 2S seed storage-like protein (30 aa).

This sequence belongs to the 2S seed storage albumins family. In terms of assembly, the mature protein is a heterodimer of a small and a large chain linked by 2 disulfide bonds. In terms of tissue distribution, extracted from castor bean.

Functionally, this is a 2S seed storage protein. Inhibits spore germination in R.solani and F.oxysporum. Exhibits anti-trypsin activity. The polypeptide is 2S seed storage-like protein (Ricinus communis (Castor bean)).